Consider the following 265-residue polypeptide: Bradykinin-potentiating and C-type natriuretic peptides (265 aa).

Residues 1 to 23 (MVLSRLAASGLLLLALLALSVDG) form the signal peptide. Residues 24 to 30 (KPVQQWA) constitute a propeptide that is removed on maturation. Gln-31 bears the Pyrrolidone carboxylic acid mark. The propeptide occupies 44-50 (LKVQQWA). The residue at position 51 (Gln-51) is a Pyrrolidone carboxylic acid. Residues 64–70 (LTVQQWA) constitute a propeptide that is removed on maturation. The residue at position 71 (Gln-71) is a Pyrrolidone carboxylic acid. Positions 81–87 (LTVQQWA) are excised as a propeptide. Position 88 is a pyrrolidone carboxylic acid (Gln-88). The propeptide occupies 100 to 106 (LEVQQWA). Gln-107 is subject to Pyrrolidone carboxylic acid. A propeptide spanning residues 118–120 (APL) is cleaved from the precursor. The residue at position 121 (Gln-121) is a Pyrrolidone carboxylic acid. Val-126 is a propeptide. Gln-127 is modified (pyrrolidone carboxylic acid). Residues 132 to 241 (LLQPHESPAS…GGARRLKGLA (110 aa)) constitute a propeptide that is removed on maturation. Positions 153 to 211 (GPEAASGVPSAGAEVGRSGSKAPAAPHRLSKSKGAAATSAASRPMRDLRPDGKQARQNW) are disordered. Over residues 184 to 194 (SKGAAATSAAS) the composition is skewed to low complexity. A compositionally biased stretch (basic and acidic residues) spans 196–206 (PMRDLRPDGKQ). Cys-249 and Cys-265 form a disulfide bridge.

In the N-terminal section; belongs to the bradykinin-potentiating peptide family. The protein in the C-terminal section; belongs to the natriuretic peptide family. Expressed by the venom gland.

It localises to the secreted. The protein localises to the cytoplasm. Its subcellular location is the cytosol. Functionally, modestly inhibits ACE (with highest affinity for the N-site) and reveals strong bradykinin-potentiating activity. Induces nitric oxide (NO) production depended on muscarinic acetylcholine receptor M1 subtype (CHRM1) and bradykinin B2 receptor (BDKRB2) activation. Both these receptors contribute to the vasodilation induced by this peptide that may have an indirect action on BDKRB2 and a direct agonistic action on CHRM1. In terms of biological role, peptide with several activities. It inhibits the activity of the angiotensin-converting enzyme (ACE) by a preferential interaction with its C-domain. It evokes transient hypotension (-14 mmHg) similar to that evoked by 0.5 ug of bradykinin, when injected alone into rats. It has a high bradykinin-potentiating effect (120%), when 60 nmol of BPP-10c are coinjected with 0.5 ug of bradykinin into rats. Does not affect angiotensin-1 pressor effects. Shows potent and long-lasting antihypertensive activity as well as a reduction of the heart rate. It also binds and dose-dependently promotes the activation of cytosolic argininosuccinate synthase (ASS1), an enzyme that catalyzes the conversion of citrulline, L-aspartate and ATP to argininosuccinate, AMP and pyrophosphate. It also enhances ASS1-dependent arginine production in HEK 293 cells, as well as in spontaneous hypertensive rat (SHR) and Wistar rat plasma. In addition, it induces the production of nitric-oxide (NO) by HUVEC cells via the endothelial nitric-oxide synthase (NOS3), which use arginine as a substrate and produce NO. It has been shown to be internalized by ASS1-expressing endothelial (HUVEC) and kidney (HEK 293) cells, and is detected homogenously distributed within the cell cytoplasm for up to 2 hours. Has a vasorelaxant activity in rat aortic strips and a diuretic potency in anesthetized rats. May act by activating natriuretic receptors (NPR1 and/or NPR2). In Bothrops insularis (Golden lancehead), this protein is Bradykinin-potentiating and C-type natriuretic peptides.